Here is a 614-residue protein sequence, read N- to C-terminus: Dihydroxy-acid dehydratase (614 aa).

D81 contributes to the Mg(2+) binding site. C122 provides a ligand contact to [2Fe-2S] cluster. Residues D123 and K124 each contribute to the Mg(2+) site. K124 is modified (N6-carboxylysine). A [2Fe-2S] cluster-binding site is contributed by C195. Residue E491 coordinates Mg(2+). The Proton acceptor role is filled by S517.

The protein belongs to the IlvD/Edd family. Homodimer. [2Fe-2S] cluster serves as cofactor. Mg(2+) is required as a cofactor.

The enzyme catalyses (2R)-2,3-dihydroxy-3-methylbutanoate = 3-methyl-2-oxobutanoate + H2O. It carries out the reaction (2R,3R)-2,3-dihydroxy-3-methylpentanoate = (S)-3-methyl-2-oxopentanoate + H2O. It functions in the pathway amino-acid biosynthesis; L-isoleucine biosynthesis; L-isoleucine from 2-oxobutanoate: step 3/4. The protein operates within amino-acid biosynthesis; L-valine biosynthesis; L-valine from pyruvate: step 3/4. Functionally, functions in the biosynthesis of branched-chain amino acids. Catalyzes the dehydration of (2R,3R)-2,3-dihydroxy-3-methylpentanoate (2,3-dihydroxy-3-methylvalerate) into 2-oxo-3-methylpentanoate (2-oxo-3-methylvalerate) and of (2R)-2,3-dihydroxy-3-methylbutanoate (2,3-dihydroxyisovalerate) into 2-oxo-3-methylbutanoate (2-oxoisovalerate), the penultimate precursor to L-isoleucine and L-valine, respectively. In Actinobacillus succinogenes (strain ATCC 55618 / DSM 22257 / CCUG 43843 / 130Z), this protein is Dihydroxy-acid dehydratase.